The following is a 732-amino-acid chain: mRNA-binding protein puf3 (732 aa).

The segment at 98–123 (PDSLVSTPTAPSANHHGNPFPNGKQS) is disordered. The segment covering 100-109 (SLVSTPTAPS) has biased composition (polar residues). The PUM-HD domain occupies 376 to 716 (QQSRVLYLFH…HLIMSVERFR (341 aa)). 8 Pumilio repeats span residues 396–431 (DILG…AVFQ), 432–468 (EIAS…ILLS), 469–504 (QIKG…QLIQ), 505–540 (ELDG…FILR), 541–576 (ALRP…IIEE), 577–611 (LLPH…YIFD), 612–647 (LMID…RILN), and 655–690 (ENCS…LLIS).

The protein belongs to the PUF3 family.

The protein localises to the mitochondrion outer membrane. The protein resides in the cytoplasm. Its function is as follows. RNA-binding protein involved in post-transcriptional regulation. Predominantly binds to mRNAs encoding mitochondrial proteins and localizes them to the vicinity of mitochondria for translation. Regulates mitochondrial biogenesis, motility and morphology. This Schizosaccharomyces pombe (strain 972 / ATCC 24843) (Fission yeast) protein is mRNA-binding protein puf3 (puf3).